The chain runs to 242 residues: Probable transcriptional regulatory protein NMA1902 (242 aa).

The protein belongs to the TACO1 family.

The protein localises to the cytoplasm. The chain is Probable transcriptional regulatory protein NMA1902 from Neisseria meningitidis serogroup A / serotype 4A (strain DSM 15465 / Z2491).